Here is a 294-residue protein sequence, read N- to C-terminus: UDP-3-O-acyl-N-acetylglucosamine deacetylase (294 aa).

Zn(2+)-binding residues include histidine 75, histidine 232, and aspartate 236. Histidine 259 functions as the Proton donor in the catalytic mechanism.

This sequence belongs to the LpxC family. Zn(2+) serves as cofactor.

It carries out the reaction a UDP-3-O-[(3R)-3-hydroxyacyl]-N-acetyl-alpha-D-glucosamine + H2O = a UDP-3-O-[(3R)-3-hydroxyacyl]-alpha-D-glucosamine + acetate. Its pathway is glycolipid biosynthesis; lipid IV(A) biosynthesis; lipid IV(A) from (3R)-3-hydroxytetradecanoyl-[acyl-carrier-protein] and UDP-N-acetyl-alpha-D-glucosamine: step 2/6. Catalyzes the hydrolysis of UDP-3-O-myristoyl-N-acetylglucosamine to form UDP-3-O-myristoylglucosamine and acetate, the committed step in lipid A biosynthesis. This is UDP-3-O-acyl-N-acetylglucosamine deacetylase from Campylobacter lari (strain RM2100 / D67 / ATCC BAA-1060).